We begin with the raw amino-acid sequence, 199 residues long: HTH-type transcriptional regulator BetI (199 aa).

One can recognise an HTH tetR-type domain in the interval 8-68; it reads EIRKPQLVKA…ETMREILRQL (61 aa). The segment at residues 31–50 is a DNA-binding region (H-T-H motif); sequence SISLISKEAGVSTGIINHYF.

It participates in amine and polyamine biosynthesis; betaine biosynthesis via choline pathway [regulation]. In terms of biological role, repressor involved in the biosynthesis of the osmoprotectant glycine betaine. It represses transcription of the choline transporter BetT and the genes of BetAB involved in the synthesis of glycine betaine. The polypeptide is HTH-type transcriptional regulator BetI (Vibrio campbellii (strain ATCC BAA-1116)).